Consider the following 38-residue polypeptide: Large ribosomal subunit protein bL36 (38 aa).

It belongs to the bacterial ribosomal protein bL36 family.

This is Large ribosomal subunit protein bL36 from Prochlorococcus marinus (strain SARG / CCMP1375 / SS120).